The sequence spans 90 residues: Large ribosomal subunit protein bL27 (90 aa).

Belongs to the bacterial ribosomal protein bL27 family.

This Paracoccus denitrificans (strain Pd 1222) protein is Large ribosomal subunit protein bL27.